The following is a 75-amino-acid chain: Protease B inhibitor 1 (75 aa).

Thr-74 is modified (phosphothreonine).

It belongs to the protease inhibitor I9 family. Part of the heterodimeric LMA1 complex together with the thioredoxin II/TRX2. LMA1 binds to the ATPase SEC18.

Its subcellular location is the cytoplasm. The protein localises to the nucleus. Cytosolic inhibitor of vacuolar proteinase B (yscB), probably regulating protease B activity during limited proteolysis. PBI2 is a component of the LMA1 complex, which is involved in the facilitation of vesicle fusion such as homotypic vacuole and ER-derived COPII vesicle fusion with the Golgi. The sequence is that of Protease B inhibitor 1 (PBI2) from Saccharomyces cerevisiae (Baker's yeast).